The chain runs to 610 residues: Zinc metalloproteinase-disintegrin-like halysase (610 aa).

The signal sequence occupies residues 1–20 (MIQVLLVTICLAVFPYQGSS). Residues 21–182 (IILESGNVND…WESYEPIKKA (162 aa)) constitute a propeptide that is removed on maturation. The 197-residue stretch at 199 to 395 (KYVKLVMVAD…DMPQCILKKP (197 aa)) folds into the Peptidase M12B domain. The N-linked (GlcNAc...) asparagine glycan is linked to asparagine 218. 3 cysteine pairs are disulfide-bonded: cysteine 310–cysteine 390, cysteine 350–cysteine 374, and cysteine 352–cysteine 357. Residue histidine 335 coordinates Zn(2+). Glutamate 336 is a catalytic residue. The Zn(2+) site is built by histidine 339 and histidine 345. The 86-residue stretch at 403 to 488 (PPVCGNYFVE…AECTDRFQRN (86 aa)) folds into the Disintegrin domain. Residues valine 405, asparagine 408, phenylalanine 410, glutamate 412, glutamate 415, and aspartate 418 each coordinate Ca(2+). Cystine bridges form between cysteine 406-cysteine 435, cysteine 417-cysteine 430, cysteine 419-cysteine 425, cysteine 429-cysteine 452, cysteine 443-cysteine 449, cysteine 448-cysteine 474, cysteine 461-cysteine 481, cysteine 468-cysteine 499, cysteine 492-cysteine 504, cysteine 511-cysteine 561, cysteine 526-cysteine 572, cysteine 539-cysteine 549, cysteine 556-cysteine 598, and cysteine 592-cysteine 603. Positions 467–469 (ECD) match the D/ECD-tripeptide motif.

It belongs to the venom metalloproteinase (M12B) family. P-III subfamily. P-IIIa sub-subfamily. In terms of assembly, monomer. The cofactor is Zn(2+). In terms of tissue distribution, expressed by the venom gland.

It is found in the secreted. With respect to regulation, inhibited by EDTA and EGTA. Not inhibited by PMSF, antipain, pepstatin, and iodoacetamide. Functionally, strongly inhibits the collagen-induced human platelet aggregation (inhibition of alpha-2/beta-1 (ITGA2/ITGB1) integrin). Hydrolyzes the Aalpha-chain of fibrinogen, without cleavage of Bbeta- and gamma-chains. Degrades type IV collagen (but not types I, II and V), fibronectin and vitronectin and also integrins alpha-1/beta-1 (ITGA1/ITGB1) and alpha-5/beta/1 (ITGA5/ITGB1) (but not alpha-V/beta-3 (ITGAV/ITGB3) and alpha-V/beta-5 (ITGAV/ITGB5) integrins). Both metalloproteinase (peptidase M12B) and disintegrin-like domains (recombinantly expressed and named halydin) play characteristic roles to inhibit human platelet aggregation. Induces apoptosis and strongly inhibits proliferation of endothelial cells as well as adhesion of the cells to extracellular matrix proteins. The apoptosis is closely associated with activation of caspase-3 and decreased level of Bcl-X(L)/Bax. Apohalysase, which lacks metalloprotease activity, is also able to induce the apoptosis. Cleaves insulin B chain at '34-His-|-Leu-35', '37-Glu-|-Ala-38', '38-Ala-|-Leu-39', '39-Leu-|-Tyr-40', '40-Tyr-|-Leu-41', '47-Gly-|-Phe-48' and '48-Phe-|-Phe-49' bonds. This is Zinc metalloproteinase-disintegrin-like halysase from Gloydius halys (Chinese water mocassin).